The chain runs to 100 residues: UPF0251 protein VV2_0946 (100 aa).

This sequence belongs to the UPF0251 family.

The protein is UPF0251 protein VV2_0946 of Vibrio vulnificus (strain CMCP6).